A 555-amino-acid chain; its full sequence is Potassium-transporting ATPase potassium-binding subunit (555 aa).

Helical transmembrane passes span 2–22, 60–80, 130–150, 173–193, 246–266, 278–298, 374–394, 412–432, 483–503, and 525–545; these read IWVA…PTGI, QYAL…YFIF, IGIT…VMAF, VFLP…VPQT, MSNI…PFTY, ILFV…TTSE, AGFV…GLMV, LIAV…ALAL, LVMF…AASL, and GIFI…MLVL.

It belongs to the KdpA family. The system is composed of three essential subunits: KdpA, KdpB and KdpC.

Its subcellular location is the cell membrane. Its function is as follows. Part of the high-affinity ATP-driven potassium transport (or Kdp) system, which catalyzes the hydrolysis of ATP coupled with the electrogenic transport of potassium into the cytoplasm. This subunit binds the extracellular potassium ions and delivers the ions to the membrane domain of KdpB through an intramembrane tunnel. The sequence is that of Potassium-transporting ATPase potassium-binding subunit from Bacillus cereus (strain 03BB102).